We begin with the raw amino-acid sequence, 249 residues long: Exosome complex component Rrp41 (249 aa).

This sequence belongs to the RNase PH family. Rrp41 subfamily. In terms of assembly, component of the archaeal exosome complex. Forms a hexameric ring-like arrangement composed of 3 Rrp41-Rrp42 heterodimers. The hexameric ring associates with a trimer of Rrp4 and/or Csl4 subunits.

The protein localises to the cytoplasm. Functionally, catalytic component of the exosome, which is a complex involved in RNA degradation. Has 3'-&gt;5' exoribonuclease activity. Can also synthesize heteromeric RNA-tails. The chain is Exosome complex component Rrp41 from Thermococcus kodakarensis (strain ATCC BAA-918 / JCM 12380 / KOD1) (Pyrococcus kodakaraensis (strain KOD1)).